The sequence spans 1997 residues: Autophagy-related protein 2 homolog A (1997 aa).

The region spanning 17 to 119 (CRYLLQHYLG…RGAAQGTESQ (103 aa)) is the Chorein N-terminal domain. Disordered regions lie at residues 241 to 281 (TSVQ…IQQI), 1292 to 1323 (HCPP…CLPA), 1371 to 1414 (EEIK…TDTD), 1492 to 1534 (SSRP…TQGG), and 1684 to 1718 (RLDG…SSTD). Positions 1311–1321 (PEGPSSLPPCL) are enriched in pro residues. Polar residues-rich tracts occupy residues 1393 to 1408 (RVSQ…SGDS), 1493 to 1532 (SRPN…WRTQ), and 1690 to 1718 (KSSS…SSTD).

This sequence belongs to the ATG2 family.

Its subcellular location is the preautophagosomal structure membrane. The protein resides in the lipid droplet. The protein localises to the endoplasmic reticulum membrane. The enzyme catalyses a 1,2-diacyl-sn-glycero-3-phospho-L-serine(in) = a 1,2-diacyl-sn-glycero-3-phospho-L-serine(out). The catalysed reaction is a 1,2-diacyl-sn-glycero-3-phosphoethanolamine(in) = a 1,2-diacyl-sn-glycero-3-phosphoethanolamine(out). Functionally, lipid transfer protein involved in autophagosome assembly. Tethers the edge of the isolation membrane (IM) to the endoplasmic reticulum (ER) and mediates direct lipid transfer from ER to IM for IM expansion. Binds to the ER exit site (ERES), which is the membrane source for autophagosome formation, and extracts phospholipids from the membrane source and transfers them to atg9 (atg9a or atg9b) to the IM for membrane expansion. Also regulates lipid droplets morphology and distribution within the cell. The protein is Autophagy-related protein 2 homolog A of Xenopus tropicalis (Western clawed frog).